The sequence spans 548 residues: Chaperonin GroEL (548 aa).

ATP is bound by residues 29–32 (TLGP), Lys50, 86–90 (DGTTT), Gly414, 478–480 (NAA), and Asp494.

The protein belongs to the chaperonin (HSP60) family. Forms a cylinder of 14 subunits composed of two heptameric rings stacked back-to-back. Interacts with the co-chaperonin GroES.

Its subcellular location is the cytoplasm. The catalysed reaction is ATP + H2O + a folded polypeptide = ADP + phosphate + an unfolded polypeptide.. Its function is as follows. Together with its co-chaperonin GroES, plays an essential role in assisting protein folding. The GroEL-GroES system forms a nano-cage that allows encapsulation of the non-native substrate proteins and provides a physical environment optimized to promote and accelerate protein folding. In Psychrobacter sp. (strain PRwf-1), this protein is Chaperonin GroEL.